The primary structure comprises 203 residues: Bone marrow stromal antigen 2 (203 aa).

At 1-26 (MAPTFYHYHPLPMDQKEPGCGIRWRC) the chain is on the cytoplasmic side. A helical; Signal-anchor for type II membrane protein membrane pass occupies residues 27-47 (LAAASVLILVALVIPLIIFAV). The Extracellular segment spans residues 48 to 183 (KANSEACRDG…EASITSKQNS (136 aa)). Residues N66 and N93 are each glycosylated (N-linked (GlcNAc...) asparagine). Residues 66–178 (NTTRLLQRQL…LRTAEEASIT (113 aa)) are a coiled coil. The GPI-anchor amidated serine moiety is linked to residue S183. Residues 184-203 (AGSMAVSSLLVLAVPLFLLF) constitute a propeptide, removed in mature form.

In terms of assembly, parallel homodimer; disulfide-linked. May form homotetramers under reducing conditions. Isoform 1 and isoform 2 form homodimers and also heterodimers with each other. Dimerization is essential for its antiviral activity. Interacts (via cytoplasmic domain) with ARHGAP44. Interacts with MMP14 (via C-terminal cytoplasmic tail). Interacts with LILRA4/ILT7. Interacts with RNF115. Post-translationally, the GPI anchor is essential for its antiviral activity.

It is found in the golgi apparatus. The protein localises to the trans-Golgi network. Its subcellular location is the cell membrane. The protein resides in the late endosome. It localises to the membrane raft. It is found in the cytoplasm. The protein localises to the apical cell membrane. Its function is as follows. IFN-induced antiviral host restriction factor which efficiently blocks the release of diverse mammalian enveloped viruses by directly tethering nascent virions to the membranes of infected cells. Acts as a direct physical tether, holding virions to the cell membrane and linking virions to each other. The tethered virions can be internalized by endocytosis and subsequently degraded or they can remain on the cell surface. In either case, their spread as cell-free virions is restricted. Its target viruses belong to diverse families, including retroviridae: human immunodeficiency virus type 1 (HIV-1), mouse mammary tumor virus (MMTV) and murine leukemia virus (MLV), filoviridae: ebola virus (EBOV), arenaviridae: lassa virus (LASV), and rhabdoviridae: vesicular stomatitis virus (VSV). Can inhibit cell surface proteolytic activity of MMP14 causing decreased activation of MMP15 which results in inhibition of cell growth and migration. Can stimulate signaling by LILRA4/ILT7 and consequently provide negative feedback to the production of IFN by plasmacytoid dendritic cells in response to viral infection. Plays a role in the organization of the subapical actin cytoskeleton in polarized epithelial cells. This is Bone marrow stromal antigen 2 (Bst2) from Cricetulus griseus (Chinese hamster).